The sequence spans 130 residues: EG45-like domain containing protein 2 (130 aa).

Positions 1–25 (MIKMAVKFVVVMIVFAQILAPIAEA) are cleaved as a signal peptide. Positions 28-130 (GKAVYYDPPY…GNIRVVYTPI (103 aa)) constitute an Expansin-like EG45 domain. N-linked (GlcNAc...) asparagine glycosylation is present at asparagine 106.

In terms of tissue distribution, expressed in unstressed leaves.

The protein localises to the secreted. Functionally, plays a systemic role in water and solute homeostasis. This is EG45-like domain containing protein 2 (EGC2) from Arabidopsis thaliana (Mouse-ear cress).